Consider the following 639-residue polypeptide: Muscarinic acetylcholine receptor M3 (639 aa).

Residues 1–115 (MLTHYQLCFQ…DPLGGHAVWQ (115 aa)) are Extracellular-facing. 6 N-linked (GlcNAc...) asparagine glycosylation sites follow: N16, N44, N45, N54, N97, and N101. A helical membrane pass occupies residues 116-139 (VVLIAFLTGIIALVTIIGNILVIV). Topologically, residues 140–152 (SFKVNKQLKTVNN) are cytoplasmic. The helical transmembrane segment at 153 to 173 (YFLLSLACADLIIGVISMNLF) threads the bilayer. The Extracellular segment spans residues 174 to 190 (TTYIIMGHWALGNLACD). C189 and C269 are joined by a disulfide. Residues 191–212 (LWLSIDYVASNASVMNLLVISF) form a helical membrane-spanning segment. Over 213–232 (DRYFSITRPLTYRAKRTTKR) the chain is Cytoplasmic. The chain crosses the membrane as a helical span at residues 233-255 (AGVMIGLAWIISFVLWAPAILFW). The Extracellular segment spans residues 256–277 (QYFVGKRTVPLDECFIQFLSEP). The helical transmembrane segment at 278–300 (IITFGTAIAAFYLPVTIMSILYW) threads the bilayer. Over 301 to 542 (RIYKETEKRT…LIKEKKAAQT (242 aa)) the chain is Cytoplasmic. Disordered stretches follow at residues 370-404 (PNTD…DEED) and 431-471 (LPSS…GGSF). The segment covering 382–393 (SDSWNNNDAAAS) has biased composition (low complexity). Residues 443 to 454 (ELQKSDTDSQEK) are compositionally biased toward basic and acidic residues. Residues 543–563 (LSAILFAFIITWTPYNIMVLV) form a helical membrane-spanning segment. At 564–576 (NTFCDCVPKTVWN) the chain is on the extracellular side. Residues 577-596 (LGYWLCYINSTVNPVCYALC) traverse the membrane as a helical segment. The Cytoplasmic portion of the chain corresponds to 597 to 639 (NKMFRNTFKMLLLCQCDKRKRRKQQYQQRQSVIFHKRIPREAS).

The protein belongs to the G-protein coupled receptor 1 family. Muscarinic acetylcholine receptor subfamily. CHRM3 sub-subfamily. As to expression, brain, heart atria, and ventricle.

It is found in the cell membrane. It localises to the postsynaptic cell membrane. In terms of biological role, the muscarinic acetylcholine receptor mediates various cellular responses, including inhibition of adenylate cyclase, breakdown of phosphoinositides and modulation of potassium channels through the action of G proteins. Primary transducing effect is Pi turnover. This is Muscarinic acetylcholine receptor M3 (CHRM3) from Gallus gallus (Chicken).